We begin with the raw amino-acid sequence, 206 residues long: Ribosomal RNA large subunit methyltransferase E (206 aa).

S-adenosyl-L-methionine-binding residues include glycine 54, tryptophan 56, aspartate 76, aspartate 94, and aspartate 118. Lysine 158 acts as the Proton acceptor in catalysis.

It belongs to the class I-like SAM-binding methyltransferase superfamily. RNA methyltransferase RlmE family.

Its subcellular location is the cytoplasm. It catalyses the reaction uridine(2552) in 23S rRNA + S-adenosyl-L-methionine = 2'-O-methyluridine(2552) in 23S rRNA + S-adenosyl-L-homocysteine + H(+). In terms of biological role, specifically methylates the uridine in position 2552 of 23S rRNA at the 2'-O position of the ribose in the fully assembled 50S ribosomal subunit. The protein is Ribosomal RNA large subunit methyltransferase E of Methanosphaera stadtmanae (strain ATCC 43021 / DSM 3091 / JCM 11832 / MCB-3).